We begin with the raw amino-acid sequence, 337 residues long: Ribosomal RNA small subunit methyltransferase H (337 aa).

Residues 35 to 37 (GGY), aspartate 54, phenylalanine 81, aspartate 102, and glutamine 109 each bind S-adenosyl-L-methionine. The disordered stretch occupies residues 286 to 316 (PVGPSEAEAAANPRARSAKLRAGERTDAPAP). Positions 289–300 (PSEAEAAANPRA) are enriched in low complexity.

The protein belongs to the methyltransferase superfamily. RsmH family.

Its subcellular location is the cytoplasm. It catalyses the reaction cytidine(1402) in 16S rRNA + S-adenosyl-L-methionine = N(4)-methylcytidine(1402) in 16S rRNA + S-adenosyl-L-homocysteine + H(+). Specifically methylates the N4 position of cytidine in position 1402 (C1402) of 16S rRNA. The polypeptide is Ribosomal RNA small subunit methyltransferase H (Methylobacterium sp. (strain 4-46)).